The sequence spans 114 residues: uncharacterized protein (114 aa).

This is an uncharacterized protein from Escherichia coli O6:H1 (strain CFT073 / ATCC 700928 / UPEC).